The chain runs to 176 residues: Large ribosomal subunit protein uL10 (176 aa).

This sequence belongs to the universal ribosomal protein uL10 family. In terms of assembly, part of the ribosomal stalk of the 50S ribosomal subunit. The N-terminus interacts with L11 and the large rRNA to form the base of the stalk. The C-terminus forms an elongated spine to which L12 dimers bind in a sequential fashion forming a multimeric L10(L12)X complex.

In terms of biological role, forms part of the ribosomal stalk, playing a central role in the interaction of the ribosome with GTP-bound translation factors. The protein is Large ribosomal subunit protein uL10 of Coprothermobacter proteolyticus (strain ATCC 35245 / DSM 5265 / OCM 4 / BT).